The chain runs to 1413 residues: DNA-directed RNA polymerase subunit beta' (1413 aa).

Zn(2+) contacts are provided by C70, C72, C85, and C88. Residues D460, D462, and D464 each contribute to the Mg(2+) site. Residues C819, C893, C900, and C903 each contribute to the Zn(2+) site.

This sequence belongs to the RNA polymerase beta' chain family. As to quaternary structure, the RNAP catalytic core consists of 2 alpha, 1 beta, 1 beta' and 1 omega subunit. When a sigma factor is associated with the core the holoenzyme is formed, which can initiate transcription. Requires Mg(2+) as cofactor. Zn(2+) is required as a cofactor.

The catalysed reaction is RNA(n) + a ribonucleoside 5'-triphosphate = RNA(n+1) + diphosphate. Functionally, DNA-dependent RNA polymerase catalyzes the transcription of DNA into RNA using the four ribonucleoside triphosphates as substrates. This chain is DNA-directed RNA polymerase subunit beta', found in Burkholderia vietnamiensis (strain G4 / LMG 22486) (Burkholderia cepacia (strain R1808)).